A 215-amino-acid polypeptide reads, in one-letter code: S-crystallin 3 (215 aa).

The region spanning 2–80 (PSYTLHYFNH…YLAREFGYHG (79 aa)) is the GST N-terminal domain. Residues 82–215 (SNMEMARVDF…YLKKRCRTDF (134 aa)) form the GST C-terminal domain.

The protein belongs to the GST superfamily. As to expression, lens.

Its function is as follows. S-crystallins are structural components of squids and octopi eye lens. Contains relatively little if any GST activity. The chain is S-crystallin 3 from Enteroctopus dofleini (North Pacific giant octopus).